A 452-amino-acid chain; its full sequence is Retinoid-inducible serine carboxypeptidase (452 aa).

The N-terminal stretch at 1–28 (MELSRRICLVRLWLLLLSFLLGFSAGSA) is a signal peptide. Asn-64, Asn-102, and Asn-126 each carry an N-linked (GlcNAc...) asparagine glycan. Ser-167 is a catalytic residue. N-linked (GlcNAc...) asparagine glycans are attached at residues Asn-192 and Asn-362. Residues Asp-371 and His-431 contribute to the active site.

This sequence belongs to the peptidase S10 family. In terms of tissue distribution, highly expressed in aorta, bladder, and kidney with much lower levels in all other tissues analyzed. Expression in kidney is restricted to proximal convoluted tubules.

The protein localises to the secreted. Its function is as follows. May be involved in vascular wall and kidney homeostasis. This chain is Retinoid-inducible serine carboxypeptidase (Scpep1), found in Rattus norvegicus (Rat).